The primary structure comprises 184 residues: Photosystem I assembly protein Ycf4 (184 aa).

The next 2 membrane-spanning stretches (helical) occupy residues 22–42 and 57–77; these read FCWA…GTSS and ILFF…LFIS.

The protein belongs to the Ycf4 family.

It localises to the plastid. The protein resides in the chloroplast thylakoid membrane. Functionally, seems to be required for the assembly of the photosystem I complex. This chain is Photosystem I assembly protein Ycf4, found in Phalaenopsis aphrodite subsp. formosana (Moth orchid).